The sequence spans 239 residues: Small ribosomal subunit protein eS6B (239 aa).

Residues serine 148, serine 235, and serine 236 each carry the phosphoserine modification.

It belongs to the eukaryotic ribosomal protein eS6 family. In terms of assembly, component of the small ribosomal subunit (SSU). Mature yeast ribosomes consist of a small (40S) and a large (60S) subunit. The 40S small subunit contains 1 molecule of ribosomal RNA (18S rRNA) and at least 33 different proteins. The large 60S subunit contains 3 rRNA molecules (25S, 5.8S and 5S rRNA) and at least 46 different proteins. Interacts with snoRNA U3. uS11 interacts with MPP10. Component of the ribosomal small subunit (SSU) processome composed of at least 40 protein subunits and snoRNA U3.

It is found in the cytoplasm. Functionally, component of the ribosome, a large ribonucleoprotein complex responsible for the synthesis of proteins in the cell. The small ribosomal subunit (SSU) binds messenger RNAs (mRNAs) and translates the encoded message by selecting cognate aminoacyl-transfer RNA (tRNA) molecules. The large subunit (LSU) contains the ribosomal catalytic site termed the peptidyl transferase center (PTC), which catalyzes the formation of peptide bonds, thereby polymerizing the amino acids delivered by tRNAs into a polypeptide chain. The nascent polypeptides leave the ribosome through a tunnel in the LSU and interact with protein factors that function in enzymatic processing, targeting, and the membrane insertion of nascent chains at the exit of the ribosomal tunnel. eS6 is involved in nucleolar processing of pre-18S ribosomal RNA and ribosome assembly. This is Small ribosomal subunit protein eS6B (rps602) from Schizosaccharomyces pombe (strain 972 / ATCC 24843) (Fission yeast).